A 469-amino-acid polypeptide reads, in one-letter code: MEQTKKWGFWLLTAFVVGNMVGSGIFSLPSSLASIASPFGATSAWLLTGAGVLMIALVFGHLSIRKPELTAGPQSYARALFSDPKKGNAAGFTMVWGYWVASWISNVAIITSLAGYLTSFFPILVDKREMFSIGGQEVTLGQLLTFAVCTILLWGTHAILVASINGASKLNFVTTLSKVLGFVFFIVAGLFVFQTSLFGHFYFPVQGENGTSIGIGGQVHNAAISTLWAFVGIESAVILSGRARSQRDVKRATITGLLIALSIYIIVTLITMGVLPHDKLVGSEKPFVDVLYAIVGNAGSVIMALLAILCLFGTMLGWILLGSEVPYQAAKAGDFPAFFAKTNKKGSPVIALIITNVMSQVFIFSVISRTISDAFTFLTTAATLAYLIPYLVSAIYSLKVVIKGETYDQLKGSRVRDGLIAILACAYSVFVIVTGTADLTTFILGIGLFFVGLIVYPFVSNKFQKEKQA.

Transmembrane regions (helical) follow at residues 8-28, 44-64, 90-110, 144-164, 179-199, 213-233, 254-274, 301-321, 347-367, 375-395, 417-437, and 439-459; these read GFWL…IFSL, AWLL…HLSI, AGFT…VAII, LTFA…VASI, VLGF…SLFG, IGIG…FVGI, ITGL…TMGV, VIMA…WILL, SPVI…FSVI, FTFL…VSAI, DGLI…TGTA, and LTTF…YPFV.

It belongs to the amino acid-polyamine-organocation (APC) superfamily. Basic amino acid/polyamine antiporter (APA) (TC 2.A.3.2) family.

The protein resides in the cell membrane. The catalysed reaction is L-ornithine(in) + L-arginine(out) = L-ornithine(out) + L-arginine(in). In terms of biological role, catalyzes electroneutral exchange between L-arginine and L-ornithine. The polypeptide is Putative arginine/ornithine antiporter (yvsH) (Bacillus subtilis (strain 168)).